The sequence spans 2443 residues: Non-reducing polyketide synthase olcA (2443 aa).

One can recognise a Ketosynthase family 3 (KS3) domain in the interval 5–442; that stretch reads IEPIAIVGTG…GANVHAILES (438 aa). Catalysis depends on for beta-ketoacyl synthase activity residues Cys-178, His-317, and His-362. The interval 550–885 is malonyl-CoA:ACP transacylase (MAT) domain; that stretch reads GVFTGQGAQW…AAIGSLWTYL (336 aa). The For acyl/malonyl transferase activity role is filled by Ser-645. The tract at residues 940-1070 is N-terminal hotdog fold; the sequence is NCLLGVLSPD…GVLTMTLGSA (131 aa). One can recognise a PKS/mFAS DH domain in the interval 940-1231; the sequence is NCLLGVLSPD…LVPLLEDLAD (292 aa). Residues 989-1497 form a product template (PT) domain region; the sequence is ALESAKLIAG…SLPVTISNMR (509 aa). The C-terminal hotdog fold stretch occupies residues 1085 to 1231; sequence MRAVDIEDFY…LVPLLEDLAD (147 aa). The interval 1771 to 2159 is methyltransferase (CMeT) domain; it reads NKRYLAHTHV…LERFTCALPP (389 aa). The 76-residue stretch at 2359–2434 folds into the Carrier domain; that stretch reads EILTSHLLTQ…EITSSAAAKL (76 aa). Ser-2394 is modified (O-(pantetheine 4'-phosphoryl)serine).

It carries out the reaction nicotinyl-CoA + 2 malonyl-CoA + H(+) = 4-hydroxy-6-(pyridin-3-yl)-2H-pyran-2-one + 2 CO2 + 3 CoA. It functions in the pathway secondary metabolite biosynthesis; terpenoid biosynthesis. Its function is as follows. Non-reducing polyketide synthase; part of the gene cluster that mediates the biosynthesis of 15-deoxyoxalicine B. The first step of the pathway is the synthesis of nicotinyl-CoA from nicotinic acid by the nicotinic acid-CoA ligase olcI. Nicotinyl-CoA is then a substrate of polyketide synthase olcA to produce 4-hydroxy-6-(3-pyridinyl)-2H-pyran-2-one (HPPO) which is further prenylated by the polyprenyl transferase olcH to yield geranylgeranyl-HPPO. Geranylgeranyl pyrophosphate is provided by the cluster-specific geranylgeranyl pyrophosphate synthase olcC. The FAD-dependent monooxygenase olcE catalyzes the epoxidation of geranylgeranyl-HPPO and the terpene cyclase olcD catalyzes the cyclization of the terpenoid component, resulting in the formation of the tricyclic terpene moiety seen in predecaturin E. The cytochrome P450 monooxygenase then catalyzes the allylic oxidation of predecaturin E, which is followed by spirocylization with concomitant loss of one molecule of water to form decaturin E. Decaturin E is the substrate of the cytochrome P450 monooxygenase olcJ which hydroxylates it at the C-29 position to form decaturin F. The short-chain dehydrogenase/reductase olcF may catalyze the oxidation of decaturin F to generate the 29-hydroxyl-27-one intermediate, and subsequent hemiacetal formation probably leads to the formation of decaturin C. The dioxygenase olcK may be a peroxisomal enzyme that catalyzes the hydroxylation of decaturin C into decaturin A once decaturin C is shuttled into the peroxisome by the MFS transporter olcL. Finally the cytochrome P450 monooxygenase olcB catalyzes the oxidative rearrangement to yield 15-deoxyoxalicine B. In the absence of olcJ, decaturin E may be shunted to a pathway in which it is oxidized to a ketone, possibly by olcF, to form decaturin D, which undergoes further allylic oxidation to yield decaturin G. Moreover, in the absence of oclK or oclL, oclB can convert decaturin C into 15-deoxyoxalicine A. The sequence is that of Non-reducing polyketide synthase olcA from Penicillium canescens.